The sequence spans 638 residues: 1-deoxy-D-xylulose-5-phosphate synthase (638 aa).

Thiamine diphosphate is bound by residues His-76 and 117-119 (AHS). Asp-148 lines the Mg(2+) pocket. Residues 149–150 (GS), Asn-177, Tyr-287, and Glu-369 contribute to the thiamine diphosphate site. A Mg(2+)-binding site is contributed by Asn-177.

It belongs to the transketolase family. DXPS subfamily. In terms of assembly, homodimer. Mg(2+) serves as cofactor. Requires thiamine diphosphate as cofactor.

It catalyses the reaction D-glyceraldehyde 3-phosphate + pyruvate + H(+) = 1-deoxy-D-xylulose 5-phosphate + CO2. The protein operates within metabolic intermediate biosynthesis; 1-deoxy-D-xylulose 5-phosphate biosynthesis; 1-deoxy-D-xylulose 5-phosphate from D-glyceraldehyde 3-phosphate and pyruvate: step 1/1. In terms of biological role, catalyzes the acyloin condensation reaction between C atoms 2 and 3 of pyruvate and glyceraldehyde 3-phosphate to yield 1-deoxy-D-xylulose-5-phosphate (DXP). The protein is 1-deoxy-D-xylulose-5-phosphate synthase of Rhodopseudomonas palustris (strain HaA2).